Consider the following 250-residue polypeptide: 6-phosphogluconate dehydrogenase, decarboxylating (250 aa).

2 residues coordinate substrate: Lys29 and Arg56. The residue at position 77 (Lys77) is an N6-acetyllysine. The substrate site is built by Arg214 and His220. Position 245–248 (245–248) interacts with NADP(+); the sequence is SSSY.

This sequence belongs to the 6-phosphogluconate dehydrogenase family. As to quaternary structure, homodimer.

It is found in the cytoplasm. The catalysed reaction is 6-phospho-D-gluconate + NADP(+) = D-ribulose 5-phosphate + CO2 + NADPH. The protein operates within carbohydrate degradation; pentose phosphate pathway; D-ribulose 5-phosphate from D-glucose 6-phosphate (oxidative stage): step 3/3. Catalyzes the oxidative decarboxylation of 6-phosphogluconate to ribulose 5-phosphate and CO(2), with concomitant reduction of NADP to NADPH. This Sus scrofa (Pig) protein is 6-phosphogluconate dehydrogenase, decarboxylating (PGD).